The primary structure comprises 122 residues: Large ribosomal subunit protein bL12 (122 aa).

Belongs to the bacterial ribosomal protein bL12 family. As to quaternary structure, homodimer. Part of the ribosomal stalk of the 50S ribosomal subunit. Forms a multimeric L10(L12)X complex, where L10 forms an elongated spine to which 2 to 4 L12 dimers bind in a sequential fashion. Binds GTP-bound translation factors.

Its function is as follows. Forms part of the ribosomal stalk which helps the ribosome interact with GTP-bound translation factors. Is thus essential for accurate translation. The chain is Large ribosomal subunit protein bL12 from Latilactobacillus sakei subsp. sakei (strain 23K) (Lactobacillus sakei subsp. sakei).